We begin with the raw amino-acid sequence, 134 residues long: Large-conductance mechanosensitive channel (134 aa).

2 helical membrane passes run 16–36 (VIDL…VTAL) and 81–101 (GDFI…FIIV).

It belongs to the MscL family. As to quaternary structure, homopentamer.

Its subcellular location is the cell inner membrane. In terms of biological role, channel that opens in response to stretch forces in the membrane lipid bilayer. May participate in the regulation of osmotic pressure changes within the cell. The polypeptide is Large-conductance mechanosensitive channel (Xylella fastidiosa (strain Temecula1 / ATCC 700964)).